Consider the following 100-residue polypeptide: Large ribosomal subunit protein bL28 (100 aa).

This sequence belongs to the bacterial ribosomal protein bL28 family.

The sequence is that of Large ribosomal subunit protein bL28 from Gluconacetobacter diazotrophicus (strain ATCC 49037 / DSM 5601 / CCUG 37298 / CIP 103539 / LMG 7603 / PAl5).